The sequence spans 472 residues: Trigger factor (472 aa).

A PPIase FKBP-type domain is found at 174–261; it reads GDIALVSFKG…LEDLKIKELP (88 aa). The segment at 433-472 is disordered; it reads NNTVVEKPPEKARDQIKEKSSKKKTTKTNKEKKSSKTPKS. The span at 439–451 shows a compositional bias: basic and acidic residues; it reads KPPEKARDQIKEK.

It belongs to the FKBP-type PPIase family. Tig subfamily.

It localises to the cytoplasm. It carries out the reaction [protein]-peptidylproline (omega=180) = [protein]-peptidylproline (omega=0). Its function is as follows. Involved in protein export. Acts as a chaperone by maintaining the newly synthesized protein in an open conformation. Functions as a peptidyl-prolyl cis-trans isomerase. This Prochlorococcus marinus (strain NATL1A) protein is Trigger factor.